The following is a 374-amino-acid chain: Secondary metabolism regulator laeA (374 aa).

The disordered stretch occupies residues 1-75; it reads MFEMGPVGTR…NRNGSPSMSP (75 aa). Polar residues predominate over residues 23-40; that stretch reads SYHSPTSSDRGRSRQNSD. Position 207 is an S-methylmethionine (M207).

The protein belongs to the methyltransferase superfamily. LaeA methyltransferase family. In terms of assembly, component of the heterotrimeric velvet complex composed of laeA, veA and velB; VeA acting as a bridging protein between laeA and velB. Post-translationally, self-methylates at Met-207.

The protein localises to the nucleus. The catalysed reaction is L-methionyl-[protein] + S-adenosyl-L-methionine = S-methyl-L-methionyl-[protein] + S-adenosyl-L-homocysteine. In terms of biological role, methyltransferase that performs automethylation at Met-207. No other methyl-accepting substrate has been identified yet. Component of the velvet transcription factor complex that acts as a global regulator for secondary metabolite gene expression. Controls the expression of the sterigmatocystin, penicillin, and lovastatin gene clusters. Controls light-dependent formation of the velB-vosA complex, veA protein modification, and is required for light-mediated inhibition of sexual development. Within the velvet complex, controls light-dependent secondary metabolism. Involved in the defense response against Drosophila melanogaster larval grazing. The sequence is that of Secondary metabolism regulator laeA from Emericella nidulans (Aspergillus nidulans).